The sequence spans 996 residues: MNPSTLKPSHTHPSLLLPAPSPLRTQRRRFRVSLPRCSSDTNNPASSSSPPQRPPKELNGIEILVDKLSSPARLATSAVIVAGAVAAGYGLGSRFGGSRNAALGGAVALGAAGGAAAYALNAAAPQVAAVNLHNYVAGFDDPSILTREDIEVIANKYGVSKQDEAFKAEICDIYSEFVSSVIPPGGEELKGDEVDKIVNFKSSLGLDDPDAAAVHMEIGRKLFRQRLEVGDREGGVEQRRAFQKLIYVSNIVFGDASSFLLPWKRVFKVTESQVEVAIRDNAQRLYASKLKSVGRDFDLGKLVTLKETQSLCCLSDELAENLFREHARKLVEENISVALGILKSRTRAVPGVSQVVEEIEKVLAFNDLLISFKNHSDIDRLARGVGPVSLVGGEYDADRKIEDLKLLYRAYVSDALSSGRMEDNKFAALNQLKNIFGLGKREAEAILLDITRKVYRKRLGQTVSSGELEMADSKAAFLQNLCDELHFDPQKASELHEEIYRQKLQQCVADGELTDENVAALLKLRVMLCVPQQTVEAAHAEICGNLFEKIVKDAIASGVDGYDDETKKSVRKAAHGLRLTKETALSIASKAVRKMFITYVKRSRSAKGNGESAKELKKLIAFNTLVVTKLVEDIKGESPDVKIEEPKIEEPEEIRESEEYEMRITSDTQENKTGQRACRKDGKAWSDRITLKDDLPEKDRADLYKTFLTYCLTGDVVRIPFGVEIKKKKDDTEYIYLNQLGGILGLTGKVIMDVHRGLAEQAFRKQAEVLLADGQLTKARVEQLGKMQKEIGLSQEYAQKIIKNITTTKMAAAIETAVTQGKLNMKQIRELKESNVDLDSMVSVSLRETIFKKTVGDIFSSGTGEFDEEEVYEKIPLDLNINKEKARGVVCELAQNRLSNSLIQAVALLRQRNHKGVVFSLNNLLACDKAVPSQTLSWEVSEELSDLYTIYLKSDPSPEKLSRLQYLLGINDSTAAALRDSEDSLLETAEEEKFVF.

Low complexity-rich tracts occupy residues 1 to 18 (MNPS…LLLP) and 38 to 50 (SSDT…SSSP). The transit peptide at 1–37 (MNPSTLKPSHTHPSLLLPAPSPLRTQRRRFRVSLPRC) directs the protein to the chloroplast. The disordered stretch occupies residues 1-57 (MNPSTLKPSHTHPSLLLPAPSPLRTQRRRFRVSLPRCSSDTNNPASSSSPPQRPPKE). The Stromal segment spans residues 38–73 (SSDTNNPASSSSPPQRPPKELNGIEILVDKLSSPAR). A helical transmembrane segment spans residues 74–92 (LATSAVIVAGAVAAGYGLG). Residues 93–100 (SRFGGSRN) are Chloroplast intermembrane-facing. A helical membrane pass occupies residues 101–120 (AALGGAVALGAAGGAAAYAL). Over 121-244 (NAAAPQVAAV…GVEQRRAFQK (124 aa)) the chain is Stromal. Residues 245–262 (LIYVSNIVFGDASSFLLP) traverse the membrane as a helical segment. At 263 to 349 (WKRVFKVTES…GILKSRTRAV (87 aa)) the chain is on the chloroplast intermembrane side. The helical transmembrane segment at 350-367 (PGVSQVVEEIEKVLAFND) threads the bilayer. The Stromal portion of the chain corresponds to 368–613 (LLISFKNHSD…RSAKGNGESA (246 aa)). The helical transmembrane segment at 614–631 (KELKKLIAFNTLVVTKLV) threads the bilayer. Residues 632 to 702 (EDIKGESPDV…DDLPEKDRAD (71 aa)) lie on the Chloroplast intermembrane side of the membrane. A helical transmembrane segment spans residues 703–719 (LYKTFLTYCLTGDVVRI). At 720–996 (PFGVEIKKKK…ETAEEEKFVF (277 aa)) the chain is on the stromal side.

Belongs to the chloroplast envelope anion channel-forming Tic110 (TC 1.A.18) family. Part of the Tic complex. Interacts with TIC32, HSP93 and CPN60. Interacts with the Toc complex components TOC75 and TOC159. Binds specifically chloroplast pre-proteins. In terms of processing, contains at least one interchain redox-active disulfide bond.

Its subcellular location is the plastid. It is found in the chloroplast inner membrane. Its function is as follows. Involved in protein precursor import into chloroplasts. Forms a voltage-dependent cation-selective channel at the inner envelope of chloroplasts, which specifically responds to a transit peptide. Calcium acts as an effector of gating and selectivity. The chain is Protein TIC110, chloroplastic (TIC110) from Pisum sativum (Garden pea).